Reading from the N-terminus, the 478-residue chain is Oxidative stress-induced growth inhibitor 1 (478 aa).

Ser12 carries the phosphoserine modification.

The protein belongs to the OKL38 family. The cofactor is NADPH.

The protein localises to the midbody. Functionally, monooxygenase catalytic activity. Involved in regulation of cytokinesis; promotes RHOA activity, probably acting locally at the midbody in late cytokinesis. Monooxygenase activity is involved in stabilizing transient structures between daughter cells, termed intercellular bridges, before abscission. Regulates differentiation and proliferation through the regulation of cell death. This chain is Oxidative stress-induced growth inhibitor 1, found in Mus musculus (Mouse).